The chain runs to 83 residues: Toxin TdNa5 (83 aa).

A signal peptide spans 1-20; sequence MKTIIFFIACLMLIDVVVES. The LCN-type CS-alpha/beta domain occupies 21-82; that stretch reads KDGYIIEHRG…IFDSNNNKCG (62 aa). Intrachain disulfides connect Cys-31/Cys-81, Cys-35/Cys-57, Cys-43/Cys-62, and Cys-47/Cys-64. At Cys-81 the chain carries Cysteine amide.

It belongs to the long (4 C-C) scorpion toxin superfamily. Sodium channel inhibitor family. Beta subfamily. As to expression, expressed by the venom gland.

The protein resides in the secreted. In terms of biological role, inhibits the sodium currents (Nav) in an apparent irreversible manner. Produces small depolarization and induces repetitive firing in squid axons. Is specific for arthropods (crickets, triatomides, crabs and squids), but is non-toxic to mice. Shows antibacterial activity against both Gram-positive and Gram-negative bacteria. The protein is Toxin TdNa5 of Tityus discrepans (Venezuelan scorpion).